The following is a 36-amino-acid chain: Pancreatic polypeptide (36 aa).

The residue at position 36 (tyrosine 36) is a Tyrosine amide.

Belongs to the NPY family.

The protein resides in the secreted. Hormone secreted by pancreatic cells that acts as a regulator of pancreatic and gastrointestinal functions probably by signaling through the G protein-coupled receptor NPY4R2. The chain is Pancreatic polypeptide (PPY) from Macaca mulatta (Rhesus macaque).